The chain runs to 88 residues: Small ribosomal subunit protein bS20 (88 aa).

Belongs to the bacterial ribosomal protein bS20 family.

Its function is as follows. Binds directly to 16S ribosomal RNA. The polypeptide is Small ribosomal subunit protein bS20 (Heliobacterium modesticaldum (strain ATCC 51547 / Ice1)).